A 352-amino-acid polypeptide reads, in one-letter code: Anthranilate phosphoribosyltransferase (352 aa).

5-phospho-alpha-D-ribose 1-diphosphate is bound by residues Gly96, 99-100 (GS), Ser104, 106-109 (NIST), 124-132 (KHGNRSVSS), and Ser136. Gly96 provides a ligand contact to anthranilate. Residue Ser108 participates in Mg(2+) binding. Asn127 provides a ligand contact to anthranilate. Arg182 provides a ligand contact to anthranilate. Asp241 and Glu242 together coordinate Mg(2+).

This sequence belongs to the anthranilate phosphoribosyltransferase family. Homodimer. Mg(2+) is required as a cofactor.

It catalyses the reaction N-(5-phospho-beta-D-ribosyl)anthranilate + diphosphate = 5-phospho-alpha-D-ribose 1-diphosphate + anthranilate. It participates in amino-acid biosynthesis; L-tryptophan biosynthesis; L-tryptophan from chorismate: step 2/5. Catalyzes the transfer of the phosphoribosyl group of 5-phosphorylribose-1-pyrophosphate (PRPP) to anthranilate to yield N-(5'-phosphoribosyl)-anthranilate (PRA). The protein is Anthranilate phosphoribosyltransferase of Syntrophotalea carbinolica (strain DSM 2380 / NBRC 103641 / GraBd1) (Pelobacter carbinolicus).